The following is a 114-amino-acid chain: Superoxide dismutase [Cu-Zn] (114 aa).

Cu cation is bound by residues His-37, His-39, and His-54. Positions 48-68 (CMSSGPHFNPRNKEHGAPTDE) are disordered. Positions 54, 62, 71, and 74 each coordinate Zn(2+). Over residues 58-68 (RNKEHGAPTDE) the composition is skewed to basic and acidic residues. His-111 contacts Cu cation.

The protein belongs to the Cu-Zn superoxide dismutase family. As to quaternary structure, homodimer. It depends on Cu cation as a cofactor. The cofactor is Zn(2+).

It is found in the cytoplasm. The enzyme catalyses 2 superoxide + 2 H(+) = H2O2 + O2. In terms of biological role, destroys radicals which are normally produced within the cells and which are toxic to biological systems. This is Superoxide dismutase [Cu-Zn] from Drosophila miranda (Fruit fly).